We begin with the raw amino-acid sequence, 139 residues long: Natriuretic peptide Mc-NP (139 aa).

The N-terminal stretch at 1-25 (MVGLSRLRGGGLLLVLALLPLALDG) is a signal peptide. Residues 26–75 (KPLEEAPTAPSRIIPFSRPVRKQSQAVLDPMVHPERPAGSGDDGDSRRLE) constitute a propeptide that is removed on maturation. Positions 45–72 (VRKQSQAVLDPMVHPERPAGSGDDGDSR) are disordered. Cys86 and Cys102 are joined by a disulfide. The propeptide occupies 117-139 (IIPFSRPVRKESRAALDRMQQPG).

Belongs to the natriuretic peptide family. As to expression, expressed by the venom gland.

It is found in the secreted. Snake venom natriuretic peptide that dose-dependently induces the rapid relaxation of rat aortic strips phenylephrine-precontracted. Acts by stimulating cGMP production in a dose-dependent manner (by probably activating NPR1 and/or NPR2). May also show potent hypotensive effects. A synthetic peptide (AA 77-108, where the Cys-95 is replaced by a Ser) increases sodium excretion and urinary volume in rat kidneys. This chain is Natriuretic peptide Mc-NP, found in Micrurus corallinus (Brazilian coral snake).